The following is a 452-amino-acid chain: Bifunctional protein GlmU (452 aa).

The segment at 1-226 (MAFSVVVLAA…AVEVEGVNNR (226 aa)) is pyrophosphorylase. UDP-N-acetyl-alpha-D-glucosamine contacts are provided by residues 8-11 (LAAG), lysine 22, glutamine 73, and 78-79 (GT). Aspartate 102 contacts Mg(2+). UDP-N-acetyl-alpha-D-glucosamine contacts are provided by glycine 137, glutamate 151, asparagine 166, and asparagine 224. Asparagine 224 contributes to the Mg(2+) binding site. The interval 227–247 (LQLANLERALQNRQADELMTN) is linker. The interval 248–452 (GVTLLDPSRF…IPNWPRPTKK (205 aa)) is N-acetyltransferase. The UDP-N-acetyl-alpha-D-glucosamine site is built by arginine 330 and lysine 348. Catalysis depends on histidine 360, which acts as the Proton acceptor. Residues tyrosine 363 and asparagine 374 each contribute to the UDP-N-acetyl-alpha-D-glucosamine site. Acetyl-CoA contacts are provided by residues alanine 377, 383–384 (NY), serine 402, alanine 420, and arginine 437.

In the N-terminal section; belongs to the N-acetylglucosamine-1-phosphate uridyltransferase family. This sequence in the C-terminal section; belongs to the transferase hexapeptide repeat family. Homotrimer. Mg(2+) is required as a cofactor.

The protein resides in the cytoplasm. It carries out the reaction alpha-D-glucosamine 1-phosphate + acetyl-CoA = N-acetyl-alpha-D-glucosamine 1-phosphate + CoA + H(+). It catalyses the reaction N-acetyl-alpha-D-glucosamine 1-phosphate + UTP + H(+) = UDP-N-acetyl-alpha-D-glucosamine + diphosphate. The protein operates within nucleotide-sugar biosynthesis; UDP-N-acetyl-alpha-D-glucosamine biosynthesis; N-acetyl-alpha-D-glucosamine 1-phosphate from alpha-D-glucosamine 6-phosphate (route II): step 2/2. It functions in the pathway nucleotide-sugar biosynthesis; UDP-N-acetyl-alpha-D-glucosamine biosynthesis; UDP-N-acetyl-alpha-D-glucosamine from N-acetyl-alpha-D-glucosamine 1-phosphate: step 1/1. Its pathway is bacterial outer membrane biogenesis; LPS lipid A biosynthesis. In terms of biological role, catalyzes the last two sequential reactions in the de novo biosynthetic pathway for UDP-N-acetylglucosamine (UDP-GlcNAc). The C-terminal domain catalyzes the transfer of acetyl group from acetyl coenzyme A to glucosamine-1-phosphate (GlcN-1-P) to produce N-acetylglucosamine-1-phosphate (GlcNAc-1-P), which is converted into UDP-GlcNAc by the transfer of uridine 5-monophosphate (from uridine 5-triphosphate), a reaction catalyzed by the N-terminal domain. This is Bifunctional protein GlmU from Alteromonas mediterranea (strain DSM 17117 / CIP 110805 / LMG 28347 / Deep ecotype).